Consider the following 231-residue polypeptide: MSNLTVRATSTRQPVGLADAFFDRDAQTLARDLLGKVIRHRVGDLWLSARIIETEAYYCEEKGSHASLGYTEKRKALFLDGGHIYMYYARGGDSLNFSAQGPGNAVLIKSAYPWVDEISGPASLAQMLLNNPDAQGRPRPSQKLCAGQTLLCKALGLKVPVWDAKRFDHEILLVEDTGPAPTHVIQTTRLGIPHGRDEHLMYRFVDAAYAQWCTRNPLRRGQVEGRDYFLL.

It belongs to the DNA glycosylase MPG family.

The protein is Putative 3-methyladenine DNA glycosylase of Pseudomonas fluorescens (strain Pf0-1).